Here is a 171-residue protein sequence, read N- to C-terminus: CASP-like protein 5A2 (171 aa).

Over 1 to 39 the chain is Cytoplasmic; that stretch reads MDGSAHLRDPPGPAVLRWRLEDMHIIPGTSGSLALRICQ. A helical transmembrane segment spans residues 40-60; it reads FSAAIVSFSVMISAANFSSVT. A topological domain (extracellular) is located at residue Ala61. Residues 62 to 82 traverse the membrane as a helical segment; that stretch reads FCFLVAAMVLQCMWSLSVATI. Over 83 to 106 the chain is Cytoplasmic; it reads EGYAMLVGRSLRDSPLLSLFAVGD. Residues 107–127 traverse the membrane as a helical segment; sequence WVTAVITFAGACASAGIAVLV. Residues 128–148 are Extracellular-facing; the sequence is GRDIHRGCDVNFCGRYAAAAG. Residues 149–169 traverse the membrane as a helical segment; the sequence is MAFLSWLLISTSFLFTFWLLA. Residues 170–171 lie on the Cytoplasmic side of the membrane; sequence TR.

Belongs to the Casparian strip membrane proteins (CASP) family. In terms of assembly, homodimer and heterodimers.

The protein localises to the cell membrane. This Pteridium aquilinum subsp. aquilinum (Bracken fern) protein is CASP-like protein 5A2.